Here is a 366-residue protein sequence, read N- to C-terminus: C-X-C chemokine receptor type 3 (366 aa).

The Extracellular portion of the chain corresponds to 1–55 (MVPEMSERQEFQASEFAYLLENSSYDYGENETYFCCTSPPCPQDFSLNFDRTFLP). Asn22 carries an N-linked (GlcNAc...) asparagine glycan. Tyr25 and Tyr27 each carry sulfotyrosine. Asn30 is a glycosylation site (N-linked (GlcNAc...) asparagine). Residues 56–76 (VLYSLLFVLGLLGNGVVAVVL) traverse the membrane as a helical segment. Residues 77 to 88 (LSQRAALSSTDT) lie on the Cytoplasmic side of the membrane. A helical membrane pass occupies residues 89 to 109 (FLLHLAVADALLVLTLPLWAV). Over 110 to 124 (DAAIQWVFGSGLCKV) the chain is Extracellular. Cys122 and Cys201 are disulfide-bonded. Residues 125-145 (AGALFNINFYAGALLLACISF) form a helical membrane-spanning segment. Over 146–167 (DRYLSIVHATQFYRRGPPARVA) the chain is Cytoplasmic. The chain crosses the membrane as a helical span at residues 168–188 (LTCVAVWGLCLLFALPDFIFL). The Extracellular portion of the chain corresponds to 189–221 (SSHHDNRLNATHCQYNFPQEGRTALRVLQLVAG). Residue Asn197 is glycosylated (N-linked (GlcNAc...) asparagine). Residues 222 to 242 (FLLPLLVMAYCYARILTVLLV) traverse the membrane as a helical segment. At 243–254 (SRGQRRLRAMRL) the chain is on the cytoplasmic side. Residues 255-275 (VVVVVVAFALCWTPYHLVVLV) form a helical membrane-spanning segment. The Extracellular segment spans residues 276-299 (DTLMDLGALARNCGRESRVDVAKS). Residues 300-320 (VTSGMGYMHCCLNPLLYAFVG) traverse the membrane as a helical segment. Topologically, residues 321-366 (VKFRERMWVLLMRLGCPDQRGHQRQPSASRRDSSWSETTEASYSGL) are cytoplasmic. The tract at residues 339-366 (QRGHQRQPSASRRDSSWSETTEASYSGL) is disordered. Residues 355–366 (WSETTEASYSGL) show a composition bias toward polar residues.

This sequence belongs to the G-protein coupled receptor 1 family. Homomer. Forms heteromers with ACKR4. Interacts with PF4/CXCL4. Sulfation on Tyr-25 and Tyr-27 is essential for CXCL10 binding. Post-translationally, N-glycosylated.

The protein localises to the cell membrane. Functionally, receptor for the C-X-C chemokine CXCL9, CXCL10 and CXCL11 and mediates the proliferation, survival and angiogenic activity of mesangial cells through a heterotrimeric G-protein signaling pathway. Probably promotes cell chemotaxis response. Binds to CCL21. Upon activation by PF4, induces activated T-lymphocytes migration mediated via downstream Ras/extracellular signal-regulated kinase (ERK) signaling. The protein is C-X-C chemokine receptor type 3 (CXCR3) of Capra hircus (Goat).